Reading from the N-terminus, the 1201-residue chain is ATPase with bromodomain protein abo2 (1201 aa).

Disordered stretches follow at residues 1 to 223 and 305 to 324; these read MRRR…MRGP and CDSD…TSDV. A compositionally biased stretch (acidic residues) spans 13 to 24; it reads DDNEDNEEDDDY. A compositionally biased stretch (basic and acidic residues) spans 29 to 38; that stretch reads HSEKSEDHSN. Residues 66 to 89 are compositionally biased toward polar residues; sequence FSSLQKHLNTETPSFSVSIENPSK. Residues 129–146 are compositionally biased toward acidic residues; that stretch reads TDNNEDESTTFKDEEDDL. Over residues 212 to 221 the composition is skewed to basic residues; it reads RRGRRKRKMR. Residues 312 to 323 are compositionally biased toward low complexity; that stretch reads ELSSTSSEQTSD. Residue 413 to 420 coordinates ATP; the sequence is GPPGTGKT. In terms of domain architecture, Bromo spans 897–1026; that stretch reads KIKNKIQVKL…AHAELNVDEL (130 aa).

Belongs to the AAA ATPase family.

The protein resides in the nucleus. It catalyses the reaction ATP + H2O = ADP + phosphate + H(+). Its function is as follows. Probable ATPase which may play a role in nucleosome organization. This is ATPase with bromodomain protein abo2 from Schizosaccharomyces pombe (strain 972 / ATCC 24843) (Fission yeast).